Consider the following 244-residue polypeptide: ATP-dependent dethiobiotin synthetase BioD 1 (244 aa).

Asn-12–Val-17 is a binding site for ATP. Thr-16 contributes to the Mg(2+) binding site. Residue Lys-37 is part of the active site. Asp-68 is an ATP binding site. 2 residues coordinate Mg(2+): Asp-68 and Glu-126. Residues Asn-186 to Arg-187, Pro-215 to Leu-217, and Glu-222 each bind ATP.

It belongs to the dethiobiotin synthetase family. As to quaternary structure, homodimer. Mg(2+) serves as cofactor.

The protein localises to the cytoplasm. The enzyme catalyses (7R,8S)-7,8-diammoniononanoate + CO2 + ATP = (4R,5S)-dethiobiotin + ADP + phosphate + 3 H(+). Its pathway is cofactor biosynthesis; biotin biosynthesis; biotin from 7,8-diaminononanoate: step 1/2. Its function is as follows. Catalyzes a mechanistically unusual reaction, the ATP-dependent insertion of CO2 between the N7 and N8 nitrogen atoms of 7,8-diaminopelargonic acid (DAPA, also called 7,8-diammoniononanoate) to form a ureido ring. This is ATP-dependent dethiobiotin synthetase BioD 1 from Pasteurella multocida (strain Pm70).